The primary structure comprises 426 residues: Enolase (426 aa).

Gln-163 is a (2R)-2-phosphoglycerate binding site. Glu-205 acts as the Proton donor in catalysis. Residues Asp-242, Glu-283, and Asp-310 each coordinate Mg(2+). The (2R)-2-phosphoglycerate site is built by Lys-335, Arg-364, Ser-365, and Lys-386. Lys-335 acts as the Proton acceptor in catalysis.

Belongs to the enolase family. It depends on Mg(2+) as a cofactor.

The protein resides in the cytoplasm. Its subcellular location is the secreted. It localises to the cell surface. The catalysed reaction is (2R)-2-phosphoglycerate = phosphoenolpyruvate + H2O. The protein operates within carbohydrate degradation; glycolysis; pyruvate from D-glyceraldehyde 3-phosphate: step 4/5. In terms of biological role, catalyzes the reversible conversion of 2-phosphoglycerate (2-PG) into phosphoenolpyruvate (PEP). It is essential for the degradation of carbohydrates via glycolysis. In Leifsonia xyli subsp. xyli (strain CTCB07), this protein is Enolase.